Reading from the N-terminus, the 416-residue chain is Protein P47 (416 aa).

It belongs to the TULIP P47 family. Part of a crude toxin extract that includes BoNTA2/NTNH, P47, OrfX2 and OrfX3; OrfX1 was not detected.

Functionally, part of a botulinum neurotoxin type A2 (BoNT) locus; may be part of a progenitor toxin complex required to protect BoNT during its passage through the host gastrointestinal tract. This is Protein P47 from Clostridium botulinum (strain Kyoto / Type A2).